Here is a 76-residue protein sequence, read N- to C-terminus: Esculentin-2MT1 (76 aa).

The signal sequence occupies residues 1–22 (MFTMKKPLLLLFFLGTISLSLC). Residues 23-37 (EEERNADEDDGEKEV) constitute a propeptide that is removed on maturation. The cysteines at positions 70 and 76 are disulfide-linked.

The protein belongs to the frog skin active peptide (FSAP) family. Esculentin subfamily. Expressed by the skin glands.

It localises to the secreted. Functionally, antimicrobial peptide. In Amolops mantzorum (Sichuan torrent frog), this protein is Esculentin-2MT1.